We begin with the raw amino-acid sequence, 280 residues long: NAD-capped RNA hydrolase NudC (280 aa).

Arg83 serves as a coordination point for substrate. Residues Cys113, Cys116, Cys131, and Cys134 each coordinate Zn(2+). Tyr139 contacts substrate. The Nudix hydrolase domain occupies 140 to 268 (PRVAPAIIVL…ASRRLLDDAL (129 aa)). A divalent metal cation is bound by residues Ala177, Glu193, and Glu197. The Nudix box motif lies at 178–199 (GFVEPSETLEAAVHREVGEEVG). A substrate-binding site is contributed by 211–218 (QPWPFPHS). Glu238 contributes to the a divalent metal cation binding site.

This sequence belongs to the Nudix hydrolase family. NudC subfamily. Homodimer. The cofactor is Mg(2+). Mn(2+) is required as a cofactor. Zn(2+) serves as cofactor.

It carries out the reaction a 5'-end NAD(+)-phospho-ribonucleoside in mRNA + H2O = a 5'-end phospho-adenosine-phospho-ribonucleoside in mRNA + beta-nicotinamide D-ribonucleotide + 2 H(+). The enzyme catalyses NAD(+) + H2O = beta-nicotinamide D-ribonucleotide + AMP + 2 H(+). The catalysed reaction is NADH + H2O = reduced beta-nicotinamide D-ribonucleotide + AMP + 2 H(+). In terms of biological role, mRNA decapping enzyme that specifically removes the nicotinamide adenine dinucleotide (NAD) cap from a subset of mRNAs by hydrolyzing the diphosphate linkage to produce nicotinamide mononucleotide (NMN) and 5' monophosphate mRNA. The NAD-cap is present at the 5'-end of some mRNAs and stabilizes RNA against 5'-processing. Has preference for mRNAs with a 5'-end purine. Catalyzes the hydrolysis of a broad range of dinucleotide pyrophosphates. In Deinococcus radiodurans (strain ATCC 13939 / DSM 20539 / JCM 16871 / CCUG 27074 / LMG 4051 / NBRC 15346 / NCIMB 9279 / VKM B-1422 / R1), this protein is NAD-capped RNA hydrolase NudC.